Consider the following 590-residue polypeptide: Acetolactate synthase large subunit (590 aa).

Glu-61 lines the thiamine diphosphate pocket. FAD-binding positions include Arg-163, 271-292, and 314-333; these read HGTAYANFAVSECDLLIALGAR and DIDPAEVGKNRIPQVAIVGD. The thiamine pyrophosphate binding stretch occupies residues 405-484; the sequence is QHQMWSAQFL…VKIIIINNRW (80 aa). Residues Asp-455 and Asn-482 each coordinate Mg(2+).

This sequence belongs to the TPP enzyme family. As to quaternary structure, dimer of large and small chains. It depends on Mg(2+) as a cofactor. Thiamine diphosphate serves as cofactor.

The protein resides in the plastid. It localises to the chloroplast. The catalysed reaction is 2 pyruvate + H(+) = (2S)-2-acetolactate + CO2. Its pathway is amino-acid biosynthesis; L-isoleucine biosynthesis; L-isoleucine from 2-oxobutanoate: step 1/4. It functions in the pathway amino-acid biosynthesis; L-valine biosynthesis; L-valine from pyruvate: step 1/4. The chain is Acetolactate synthase large subunit (ilvB) from Pyropia yezoensis (Susabi-nori).